The primary structure comprises 715 residues: Serine/arginine repetitive matrix protein 5 (715 aa).

A compositionally biased stretch (low complexity) spans M1 to S13. The interval M1–A715 is disordered. Residues L32 to P59 are compositionally biased toward polar residues. Low complexity predominate over residues S60–S79. Positions S80 to T90 are enriched in basic residues. A compositionally biased stretch (polar residues) spans S92–S104. Basic residues predominate over residues H112–P136. 2 stretches are compositionally biased toward polar residues: residues T213–G224 and Y257–A272. Residues S273 to R285 show a composition bias toward low complexity. The span at S286–K320 shows a compositional bias: basic residues. 2 stretches are compositionally biased toward basic and acidic residues: residues P359–G388 and K397–H521. Over residues R522 to S536 the composition is skewed to basic residues. Basic and acidic residues-rich tracts occupy residues P539–R595 and S611–N628. The segment covering T657–R666 has biased composition (polar residues). The span at T667–S681 shows a compositional bias: low complexity. Residues G682–A715 show a composition bias toward polar residues.

The chain is Serine/arginine repetitive matrix protein 5 (SRRM5) from Homo sapiens (Human).